We begin with the raw amino-acid sequence, 336 residues long: Phosphonate dehydrogenase (336 aa).

NAD(+)-binding positions include 155-156 (AI), Glu175, 235-237 (PCR), and Asp261. Arg237 is an active-site residue. The active site involves Glu266. His292 acts as the Proton donor in catalysis. An NAD(+)-binding site is contributed by 292 to 295 (HIGS).

Homodimer.

It carries out the reaction phosphonate + NAD(+) + H2O = phosphate + NADH + H(+). With respect to regulation, inhibited by NaCl, NADH and sulfite. In terms of biological role, catalyzes phosphite (phosphonate) oxidation. This is Phosphonate dehydrogenase (ptxD) from Stutzerimonas stutzeri (Pseudomonas stutzeri).